Consider the following 204-residue polypeptide: Cytochrome c biogenesis ATP-binding export protein CcmA (204 aa).

The ABC transporter domain maps to L3 to T204. G35–T42 provides a ligand contact to ATP.

Belongs to the ABC transporter superfamily. CcmA exporter (TC 3.A.1.107) family. In terms of assembly, the complex is composed of two ATP-binding proteins (CcmA) and two transmembrane proteins (CcmB).

The protein resides in the cell inner membrane. The enzyme catalyses heme b(in) + ATP + H2O = heme b(out) + ADP + phosphate + H(+). Part of the ABC transporter complex CcmAB involved in the biogenesis of c-type cytochromes; once thought to export heme, this seems not to be the case, but its exact role is uncertain. Responsible for energy coupling to the transport system. This Nitrobacter hamburgensis (strain DSM 10229 / NCIMB 13809 / X14) protein is Cytochrome c biogenesis ATP-binding export protein CcmA.